A 475-amino-acid chain; its full sequence is 3-isopropylmalate dehydratase large subunit (475 aa).

[4Fe-4S] cluster contacts are provided by C349, C409, and C412.

The protein belongs to the aconitase/IPM isomerase family. LeuC type 1 subfamily. As to quaternary structure, heterodimer of LeuC and LeuD. It depends on [4Fe-4S] cluster as a cofactor.

It catalyses the reaction (2R,3S)-3-isopropylmalate = (2S)-2-isopropylmalate. It participates in amino-acid biosynthesis; L-leucine biosynthesis; L-leucine from 3-methyl-2-oxobutanoate: step 2/4. Functionally, catalyzes the isomerization between 2-isopropylmalate and 3-isopropylmalate, via the formation of 2-isopropylmaleate. This is 3-isopropylmalate dehydratase large subunit from Cereibacter sphaeroides (strain KD131 / KCTC 12085) (Rhodobacter sphaeroides).